Consider the following 360-residue polypeptide: Phosphoserine aminotransferase (360 aa).

Residue Arg-41 participates in L-glutamate binding. Trp-101, Thr-152, Asp-172, and Gln-195 together coordinate pyridoxal 5'-phosphate. Lys-196 is subject to N6-(pyridoxal phosphate)lysine. Residue 237–238 (NT) participates in pyridoxal 5'-phosphate binding.

It belongs to the class-V pyridoxal-phosphate-dependent aminotransferase family. SerC subfamily. Homodimer. Requires pyridoxal 5'-phosphate as cofactor.

It localises to the cytoplasm. The enzyme catalyses O-phospho-L-serine + 2-oxoglutarate = 3-phosphooxypyruvate + L-glutamate. It carries out the reaction 4-(phosphooxy)-L-threonine + 2-oxoglutarate = (R)-3-hydroxy-2-oxo-4-phosphooxybutanoate + L-glutamate. It functions in the pathway amino-acid biosynthesis; L-serine biosynthesis; L-serine from 3-phospho-D-glycerate: step 2/3. The protein operates within cofactor biosynthesis; pyridoxine 5'-phosphate biosynthesis; pyridoxine 5'-phosphate from D-erythrose 4-phosphate: step 3/5. Its function is as follows. Catalyzes the reversible conversion of 3-phosphohydroxypyruvate to phosphoserine and of 3-hydroxy-2-oxo-4-phosphonooxybutanoate to phosphohydroxythreonine. In Burkholderia ambifaria (strain MC40-6), this protein is Phosphoserine aminotransferase.